The sequence spans 152 residues: UPF0266 membrane protein PM0830 (152 aa).

Transmembrane regions (helical) follow at residues 1–21, 45–65, and 66–86; these read MMII…YAFY, KDAL…YTNL, and SSAT…AAFI.

This sequence belongs to the UPF0266 family.

The protein resides in the cell inner membrane. The sequence is that of UPF0266 membrane protein PM0830 from Pasteurella multocida (strain Pm70).